We begin with the raw amino-acid sequence, 626 residues long: DEAD-box ATP-dependent RNA helicase 16 (626 aa).

Residues 1 to 48 (MGKTKLKPVEDVNSEVVDEVEKAEEVEEQRNDREQEEEQKEEEAPKSF) form a disordered region. Positions 9–47 (VEDVNSEVVDEVEKAEEVEEQRNDREQEEEQKEEEAPKS) form a coiled coil. Residues 12–27 (VNSEVVDEVEKAEEVE) show a composition bias toward acidic residues. The short motif at 46-74 (KSFEELGLDSRLIRALTKKGIEKPTLIQQ) is the Q motif element. The 183-residue stretch at 77–259 (IPYILEGKDV…KLILHNPIVL (183 aa)) folds into the Helicase ATP-binding domain. Position 90–97 (90–97 (AKTGSGKT)) interacts with ATP. The short motif at 207–210 (DEAD) is the DEAD box element. Positions 293–477 (ALLKLEVVQK…PFPLLTENAV (185 aa)) constitute a Helicase C-terminal domain. Positions 356–385 (IATDDNSQTKKQKEEAKGEANKENKKNNKR) form a coiled coil. Positions 363 to 381 (QTKKQKEEAKGEANKENKK) are enriched in basic and acidic residues. 2 disordered regions span residues 363–388 (QTKK…RSKP) and 568–626 (AMGN…QKTV).

The protein belongs to the DEAD box helicase family. DDX56/DBP9 subfamily.

The catalysed reaction is ATP + H2O = ADP + phosphate + H(+). This Arabidopsis thaliana (Mouse-ear cress) protein is DEAD-box ATP-dependent RNA helicase 16 (RH16).